A 198-amino-acid polypeptide reads, in one-letter code: Proteasome subunit beta 1 (198 aa).

The propeptide at 1–8 is removed in mature form; by autocatalysis; it reads MSMYMPGA. The active-site Nucleophile is Thr-9.

Belongs to the peptidase T1B family. In terms of assembly, the 20S proteasome core is composed of 14 alpha and 14 beta subunits that assemble into four stacked heptameric rings, resulting in a barrel-shaped structure. The two inner rings, each composed of seven catalytic beta subunits, are sandwiched by two outer rings, each composed of seven alpha subunits. The catalytic chamber with the active sites is on the inside of the barrel. Has a gated structure, the ends of the cylinder being occluded by the N-termini of the alpha-subunits. Is capped at one or both ends by the proteasome regulatory ATPase, PAN.

It localises to the cytoplasm. It catalyses the reaction Cleavage of peptide bonds with very broad specificity.. Its activity is regulated as follows. The formation of the proteasomal ATPase PAN-20S proteasome complex, via the docking of the C-termini of PAN into the intersubunit pockets in the alpha-rings, triggers opening of the gate for substrate entry. Interconversion between the open-gate and close-gate conformations leads to a dynamic regulation of the 20S proteasome proteolysis activity. Functionally, component of the proteasome core, a large protease complex with broad specificity involved in protein degradation. The polypeptide is Proteasome subunit beta 1 (Nitrosopumilus maritimus (strain SCM1)).